The primary structure comprises 214 residues: Thymidylate kinase (214 aa).

7–14 (GIDGAGKS) provides a ligand contact to ATP.

Belongs to the thymidylate kinase family.

The catalysed reaction is dTMP + ATP = dTDP + ADP. Functionally, phosphorylation of dTMP to form dTDP in both de novo and salvage pathways of dTTP synthesis. The sequence is that of Thymidylate kinase from Chlorobium luteolum (strain DSM 273 / BCRC 81028 / 2530) (Pelodictyon luteolum).